The sequence spans 444 residues: ATP-dependent protease ATPase subunit HslU (444 aa).

ATP is bound by residues Ile-20 and 62–67; that span reads GVGKTE. The segment at 137–162 is disordered; sequence LVPPSRGTSGEPERGEDSNARQTFRK. Residues Asp-257, Glu-322, and Arg-394 each contribute to the ATP site.

Belongs to the ClpX chaperone family. HslU subfamily. A double ring-shaped homohexamer of HslV is capped on each side by a ring-shaped HslU homohexamer. The assembly of the HslU/HslV complex is dependent on binding of ATP.

It localises to the cytoplasm. In terms of biological role, ATPase subunit of a proteasome-like degradation complex; this subunit has chaperone activity. The binding of ATP and its subsequent hydrolysis by HslU are essential for unfolding of protein substrates subsequently hydrolyzed by HslV. HslU recognizes the N-terminal part of its protein substrates and unfolds these before they are guided to HslV for hydrolysis. The chain is ATP-dependent protease ATPase subunit HslU from Bordetella petrii (strain ATCC BAA-461 / DSM 12804 / CCUG 43448).